Here is a 594-residue protein sequence, read N- to C-terminus: AT-rich interactive domain-containing protein 5A (594 aa).

A disordered region spans residues 1–56 (MAAPVKGNRKQSTEGDALDPPASPKPAGKQNGIQNPISLEDSPEAGGEREEEQERE). Residues 1-300 (MAAPVKGNRK…AVHLPESPQS (300 aa)) are interaction with SOX9. Position 23 is a phosphoserine (S23). Positions 55–147 (REEEQAFLVS…LVLPYVRHLK (93 aa)) constitute an ARID domain. Residues K85 and K94 each participate in a glycyl lysine isopeptide (Lys-Gly) (interchain with G-Cter in ubiquitin) cross-link. A disordered region spans residues 146–223 (LKGEDDKPLP…NSTEQQGLAS (78 aa)). The span at 165-189 (MAKENRGDDGATERPKKAKEERRMD) shows a compositional bias: basic and acidic residues. 2 positions are modified to phosphoserine: S256 and S289. Disordered regions lie at residues 281–331 (RHGA…EAQA) and 426–454 (AESPTLPPTFPSSPGLGSKRSLEEEGAAH). Residues 297 to 306 (SPQSPKGLTE) show a composition bias toward polar residues. A phosphoserine mark is found at S438 and S463.

As to quaternary structure, interacts with SOX9. Interacts with ESR1. Interacts with RORC. Post-translationally, phosphorylated by MAPK14 on serine residues involving a TLR4 signaling pathway upon lipopolysaccharide (LPS) stimulation leading to its ubiquitination and proteasomal degradation. Ubiquitinated leading to proteasomal degradation; involving WWP1 linked to MAPK14-mediated phosphorylation upon LPS stimulation.

The protein localises to the nucleus. In terms of biological role, DNA-binding protein that may regulate transcription and act as a repressor by binding to AT-rich stretches in the promoter region of target genes. May positively regulate chondrocyte-specific transcription such as of COL2A1 in collaboration with SOX9 and positively regulate histone H3 acetylation at chondrocyte-specific genes. May stimulate early-stage chondrocyte differentiation and inhibit later stage differention. Can repress ESR1-mediated transcriptional activation; proposed to act as corepressor for selective nuclear hormone receptors. As an RNA-binding protein, involved in the regulation of inflammatory response by stabilizing selective inflammation-related mRNAs, such as STAT3 and TBX21. Also stabilizes IL6 mRNA. Binds to stem loop structures located in the 3'UTRs of IL6, STAT3 and TBX21 mRNAs; at least for STAT3 prevents binding of ZC3H12A to the mRNA stem loop structure thus inhibiting its degradation activity. Contributes to elevated IL6 levels possibly implicated in autoimmunity processes. IL6-dependent stabilization of STAT3 mRNA may promote differentiation of naive CD4+ T-cells into T-helper Th17 cells. In CD4+ T-cells may also inhibit RORC-induced Th17 cell differentiation independently of IL6 signaling. Stabilization of TBX21 mRNA contributes to elevated interferon-gamma secretion in Th1 cells possibly implicated in the establishment of septic shock. Stabilizes TNFRSF4/OX40 mRNA by binding to the conserved stem loop structure in its 3'UTR; thereby competing with the mRNA-destabilizing functions of RC3H1 and endoribonuclease ZC3H12A. The protein is AT-rich interactive domain-containing protein 5A (ARID5A) of Homo sapiens (Human).